A 283-amino-acid chain; its full sequence is Phosphate import ATP-binding protein PstB (283 aa).

The segment covering M1–S20 has biased composition (polar residues). Residues M1–S32 form a disordered region. One can recognise an ABC transporter domain in the interval Y37–I278. Residue G69–S76 participates in ATP binding.

The protein belongs to the ABC transporter superfamily. Phosphate importer (TC 3.A.1.7) family. As to quaternary structure, the complex is composed of two ATP-binding proteins (PstB), two transmembrane proteins (PstC and PstA) and a solute-binding protein (PstS).

The protein localises to the cell membrane. The enzyme catalyses phosphate(out) + ATP + H2O = ADP + 2 phosphate(in) + H(+). Functionally, part of the ABC transporter complex PstSACB involved in phosphate import. Responsible for energy coupling to the transport system. This Staphylococcus aureus (strain USA300) protein is Phosphate import ATP-binding protein PstB.